Reading from the N-terminus, the 347-residue chain is Metacaspase-2 (347 aa).

Residues 1–55 (MCSLITQLCDAGQLADYVGLGWLNAVSSQPYLVQALGLQPPPRRVDVDAAFRDAK) constitute a propeptide that is removed on maturation. The tract at residues 1–70 (MCSLITQLCD…QPWVATPLPG (70 aa)) is regulates substrate access to the active site. The active site involves His158. Residues Asp173, Asp189, and Asp190 each coordinate Ca(2+). Cys213 is an active-site residue. Residue Asp220 participates in Ca(2+) binding.

Belongs to the peptidase C14B family. As to quaternary structure, monomer. Auto-proteolytic cleavage of the propeptide after Lys-55 and between the large and small subunits after Lys-268 is required for catalytic activity towards large protein substrates but is dispensable towards small oligopeptide substrates. After processing, the propeptide and the large and small subunits remain associated by non-covalent bonds. In vivo, the unprocessed enzyme appears to be the predominant form.

It localises to the recycling endosome. Its activity is regulated as follows. Activated by Ca(2+). In response to calcium binding, the 280-loop, a disordered loop consisting of residues 269-275, undergoes a conformational change which stabilizes substrates in the active site. The binding to the substrate triggers the release of the N-terminal region resulting in the activation of the enzyme. Proteolytic cleavage is required for catalytic activity towards large protein substrates. Its function is as follows. Cysteine protease that cleaves specifically after arginine or lysine residues. The polypeptide is Metacaspase-2 (Trypanosoma brucei brucei (strain 927/4 GUTat10.1)).